The following is a 273-amino-acid chain: Diaminopimelate epimerase (273 aa).

Substrate contacts are provided by N11 and N60. C69 (proton donor) is an active-site residue. Residues 70-71, N181, and 199-200 each bind substrate; these read GN and ER. C209 (proton acceptor) is an active-site residue. 210–211 contributes to the substrate binding site; it reads GT.

This sequence belongs to the diaminopimelate epimerase family. In terms of assembly, homodimer.

It localises to the cytoplasm. It carries out the reaction (2S,6S)-2,6-diaminopimelate = meso-2,6-diaminopimelate. The protein operates within amino-acid biosynthesis; L-lysine biosynthesis via DAP pathway; DL-2,6-diaminopimelate from LL-2,6-diaminopimelate: step 1/1. Its function is as follows. Catalyzes the stereoinversion of LL-2,6-diaminopimelate (L,L-DAP) to meso-diaminopimelate (meso-DAP), a precursor of L-lysine and an essential component of the bacterial peptidoglycan. In Helicobacter pylori (strain ATCC 700392 / 26695) (Campylobacter pylori), this protein is Diaminopimelate epimerase.